A 422-amino-acid polypeptide reads, in one-letter code: UDP-N-acetylglucosamine 1-carboxyvinyltransferase (422 aa).

22–23 (KN) contacts phosphoenolpyruvate. Residue arginine 93 coordinates UDP-N-acetyl-alpha-D-glucosamine. Cysteine 117 (proton donor) is an active-site residue. Cysteine 117 is subject to 2-(S-cysteinyl)pyruvic acid O-phosphothioketal. Residues 122-126 (RPVDL), aspartate 308, and leucine 330 contribute to the UDP-N-acetyl-alpha-D-glucosamine site.

Belongs to the EPSP synthase family. MurA subfamily.

It is found in the cytoplasm. The catalysed reaction is phosphoenolpyruvate + UDP-N-acetyl-alpha-D-glucosamine = UDP-N-acetyl-3-O-(1-carboxyvinyl)-alpha-D-glucosamine + phosphate. It functions in the pathway cell wall biogenesis; peptidoglycan biosynthesis. Cell wall formation. Adds enolpyruvyl to UDP-N-acetylglucosamine. This Helicobacter pylori (strain HPAG1) protein is UDP-N-acetylglucosamine 1-carboxyvinyltransferase.